The sequence spans 571 residues: RNA polymerase sigma factor SigA (571 aa).

The interval 321 to 391 (MVESNLRLVI…TRAIADQART (71 aa)) is sigma-70 factor domain-2. Residues 345–348 (DLIQ) carry the Interaction with polymerase core subunit RpoC motif. The sigma-70 factor domain-3 stretch occupies residues 400 to 476 (ETINKVLRGA…DTAVESPAEA (77 aa)). The tract at residues 489–542 (VLKTLTDRERFVLIHRFGLLDGRPKTLEEVGSAFNVTRERIRQIEAKALRKMRH) is sigma-70 factor domain-4. The segment at residues 515–534 (LEEVGSAFNVTRERIRQIEA) is a DNA-binding region (H-T-H motif).

Belongs to the sigma-70 factor family. RpoD/SigA subfamily. In terms of assembly, interacts transiently with the RNA polymerase catalytic core.

The protein resides in the cytoplasm. Functionally, sigma factors are initiation factors that promote the attachment of RNA polymerase to specific initiation sites and are then released. This sigma factor is the primary sigma factor during exponential growth. In Chlamydia muridarum (strain MoPn / Nigg), this protein is RNA polymerase sigma factor SigA.